The sequence spans 602 residues: Na(+)/dicarboxylate cotransporter 3 (602 aa).

Over 1 to 16 the chain is Cytoplasmic; that stretch reads MAALAAAAKKVWSARR. The chain crosses the membrane as a helical span at residues 17 to 37; sequence LLVLLFTPLALLPVVFALPPK. At 38–55 the chain is on the extracellular side; that stretch reads EGRCLFVILLMAVYWCTE. Residues 56–76 form a helical membrane-spanning segment; sequence ALPLSVTALLPIVLFPFMGIL. Residues 77–82 lie on the Cytoplasmic side of the membrane; sequence PSNKVC. A helical membrane pass occupies residues 83–103; it reads PQYFLDTNFLFLSGLIMASAI. The Extracellular portion of the chain corresponds to 104-137; the sequence is EEWNLHRRIALKILMLVGVQPARLILGMMVTTSF. Residues 138–158 traverse the membrane as a helical segment; it reads LSMWLSNTASTAMMLPIANAI. Topologically, residues 159–229 are cytoplasmic; that stretch reads LKSLFGQKEV…SRKEDEYRRN (71 aa). A helical transmembrane segment spans residues 230–250; sequence IWKGFLISIPYSASIGGTATL. Residues 251–278 lie on the Extracellular side of the membrane; sequence TGTAPNLILLGQLKSFFPQCDVVNFGSW. A helical transmembrane segment spans residues 279–299; it reads FIFAFPLMLLFLLAGWLWISF. Residues 300 to 336 are Cytoplasmic-facing; sequence LYGGLSFRGWRKNKSEIRTNAEDRARAVIREEYQNLG. Residues 337–357 traverse the membrane as a helical segment; that stretch reads PIKFAEQAVFILFCMFAILLF. At 358–372 the chain is on the extracellular side; the sequence is TRDPKFIPGWASLFN. Residues 373–393 traverse the membrane as a helical segment; sequence PGFLSDAVTGVAIVTILFFFP. Topologically, residues 394-422 are cytoplasmic; that stretch reads SQRPSLKWWFDFKAPNTETEPLLTWKKAQ. An intramembrane region (helical) is located at residues 423–443; it reads ETVPWNIILLLGGGFAMAKGC. Residues 444–461 are Cytoplasmic-facing; the sequence is EESGLSVWIGGQLHPLEN. The helical transmembrane segment at 462–482 threads the bilayer; that stretch reads VPPALAVLLITVVIAFFTEFA. Topologically, residues 483-505 are extracellular; it reads SNTATIIIFLPVLAELAIRLRVH. Residues 506–526 form a helical membrane-spanning segment; sequence PLYLMIPGTVGCSFAFMLPVS. Topologically, residues 527 to 546 are cytoplasmic; it reads TPPNSIAFASGHLLVKDMVR. A helical transmembrane segment spans residues 547–567; it reads TGLLMNLMGVLLLSLAMNTWA. The Extracellular portion of the chain corresponds to 568-602; it reads QTIFQLGTFPDWADMYSVNVTALPPTLANDTFRTL. Asn586 and Asn596 each carry an N-linked (GlcNAc...) asparagine glycan.

Belongs to the SLC13A/DASS transporter (TC 2.A.47) family. NADC subfamily. In terms of tissue distribution, expression is highest in kidney. Detected in placenta, brain, liver and pancreas.

Its subcellular location is the cell membrane. It catalyses the reaction succinate(out) + 3 Na(+)(out) = succinate(in) + 3 Na(+)(in). It carries out the reaction 2-oxoglutarate(out) + 3 Na(+)(out) = 2-oxoglutarate(in) + 3 Na(+)(in). The catalysed reaction is N-acetyl-L-aspartate(out) + 3 Na(+)(out) = N-acetyl-L-aspartate(in) + 3 Na(+)(in). The enzyme catalyses glutarate(out) + 3 Na(+)(out) = glutarate(in) + 3 Na(+)(in). It catalyses the reaction fumarate(out) + 3 Na(+)(out) = fumarate(in) + 3 Na(+)(in). It carries out the reaction malate(out) + 3 Na(+)(out) = malate(in) + 3 Na(+)(in). The catalysed reaction is 2,2-dimethylsuccinate(out) + 3 Na(+)(out) = 2,2-dimethylsuccinate(in) + 3 Na(+)(in). The enzyme catalyses 2,3-dimethylsuccinate(out) + 3 Na(+)(out) = 2,3-dimethylsuccinate(in) + 3 Na(+)(in). It catalyses the reaction itaconate(out) + 3 Na(+)(out) = itaconate(in) + 3 Na(+)(in). Its activity is regulated as follows. Li(+) decreases succinate transport in the presence of Na(+). Functionally, high-affinity sodium-dicarboxylate cotransporter that accepts a range of substrates with 4-6 carbon atoms, such as the citric acid cycle intermediates succinate and alpha-ketoglutarate (2-oxoglutarate), as well as other compounds including N-acetyl-L-aspartate. Transports the dicarboxylate into the cell with a probable stoichiometry of 3 Na(+) for 1 divalent dicarboxylate, rendering the process electrogenic. Can transport citrate in a Na(+)-dependent manner, recognizing the divalent form of citrate rather than the trivalent form which is normally found in blood. Imports itaconate in hepatocytes leading to activation of TFEB-dependent lysosomal biogenesis involved in antibacterial innate immune response. The sequence is that of Na(+)/dicarboxylate cotransporter 3 (SLC13A3) from Homo sapiens (Human).